A 78-amino-acid chain; its full sequence is Translation initiation factor IF-1, chloroplastic (78 aa).

The 73-residue stretch at 1 to 73 (MASNRELIEM…TKGRIIYRLR (73 aa)) folds into the S1-like domain.

Belongs to the IF-1 family. Component of the 30S ribosomal translation pre-initiation complex which assembles on the 30S ribosome in the order IF-2 and IF-3, IF-1 and N-formylmethionyl-tRNA(fMet); mRNA recruitment can occur at any time during PIC assembly.

The protein resides in the plastid. It is found in the chloroplast. In terms of biological role, one of the essential components for the initiation of protein synthesis. Stabilizes the binding of IF-2 and IF-3 on the 30S subunit to which N-formylmethionyl-tRNA(fMet) subsequently binds. Helps modulate mRNA selection, yielding the 30S pre-initiation complex (PIC). Upon addition of the 50S ribosomal subunit IF-1, IF-2 and IF-3 are released leaving the mature 70S translation initiation complex. In Ostreococcus tauri, this protein is Translation initiation factor IF-1, chloroplastic.